Reading from the N-terminus, the 669-residue chain is Potassium voltage-gated channel subfamily KQT member 1 (669 aa).

The Cytoplasmic portion of the chain corresponds to 1–120; it reads MDTASSPPNA…YNFLERPTGW (120 aa). Ser27 bears the Phosphoserine; by PKA mark. A helical membrane pass occupies residues 121–142; it reads KCFVYHFTVFLIVLVCLIFSVL. At 143–153 the chain is on the extracellular side; the sequence is STIEQYAALAT. Residues 154–176 form a helical membrane-spanning segment; that stretch reads GTLFWMEIVLVVFFGTEYVVRLW. The Cytoplasmic segment spans residues 177–192; sequence SAGCRSKYVGIWGRLR. A helical transmembrane segment spans residues 193-218; sequence FARKPISIIDLIVVVASMVVLCVGSK. Residues 219 to 226 lie on the Extracellular side of the membrane; sequence GQVFATSA. The chain crosses the membrane as a helical; Voltage-sensor span at residues 227–242; that stretch reads IRGIRFLQILRMLHVD. Residues 238–246 are interaction with KCNE3; sequence MLHVDRQGG. Residues 243-260 lie on the Cytoplasmic side of the membrane; sequence RQGGTWRLLGSVVFIHRQ. Gln244 contributes to the a 1,2-diacyl-sn-glycero-3-phospho-(1D-myo-inositol-4,5-bisphosphate) binding site. A helical transmembrane segment spans residues 261 to 283; that stretch reads ELITTLYIGFLGLIFSSYFVYLA. Residues 284–299 lie on the Extracellular side of the membrane; the sequence is EKDAVNESGRIEFGSY. Asn289 carries an N-linked (GlcNAc...) asparagine glycan. The segment at residues 300-320 is an intramembrane region (pore-forming); sequence ADALWWGVVTVTTIGYGDKVP. Residues 321–322 are Extracellular-facing; that stretch reads QT. A helical transmembrane segment spans residues 323–348; the sequence is WVGKTIASCFSVFAISFFALPAGILG. The Cytoplasmic portion of the chain corresponds to 349–669; the sequence is SGFALKVQQK…VPQTGPDEGS (321 aa). The interval 370–382 is interaction with CALM; it reads AAASLIQTAWRCY. Ser407 and Ser409 each carry phosphoserine. The tract at residues 515 to 529 is interaction with CALM; calcium-dependent; the sequence is KVIRRMQYFVAKKKF. An interaction with KCNE1 C-terminus region spans residues 535–572; the sequence is PYDVRDVIEQYSQGHLNLMVRIKELQRRLDQSIGKPSL. Positions 585–621 form a coiled coil; that stretch reads SNTIGARLNRVEDKVTQLDQRLVIITDMLHQLLSLQQ. The segment at 588–616 is interaction with AKAP9; it reads IGARLNRVEDKVTQLDQRLVIITDMLHQL. The interval 589–620 is C-terminal assembly domain (tetramerization); that stretch reads GARLNRVEDKVTQLDQRLVIITDMLHQLLSLQ.

This sequence belongs to the potassium channel family. KQT (TC 1.A.1.15) subfamily. Kv7.1/KCNQ1 sub-subfamily. As to quaternary structure, tetramer. Heterotetramer with KCNE1; targets to the membrane raft. Interacts (via C-terminus) with CALM; forms a heterooctameric structure (with 4:4 KCNQ1:CALM stoichiometry) in a calcium-independent manner. Interacts with AKAP9; targets protein kinase A (PKA) catalytic and regulatory subunits and protein phosphatase 1 (PP1) to the KCNQ1-KCNE1 complex, allowing PKA-mediated phosphorylation and increase of delayed rectifier potassium channel activity. Interacts with KCNE2; form a heterooligomer complex that targets to the membrane raft and leading to currents with an apparently instantaneous activation, a rapid deactivation process and a linear current-voltage relationship and decreases the amplitude of the outward current. Interacts with AP2M1; mediates estrogen-induced internalization via clathrin-coated vesicles. Interacts with NEDD4L; promotes internalization and decreases I(Ks) currents. Interacts with USP2; counteracts the NEDD4L-specific down-regulation of I(Ks) and restore plasma membrane localization. Heterotetramer with KCNQ5; has a voltage-gated potassium channel activity. Interacts with KCNE3; produces a current with nearly instantaneous activation with a linear current-voltage relationship and alters membrane raft localization. Interacts with KCNE4; impairs KCNQ1 localization in lipid rafts and inhibits voltage-gated potassium channel activity. Interacts with KCNE5; impairs KCNQ1 localization in lipid rafts and only conducts current upon strong and continued depolarization. Interacts with SLC5A3; forms coregulatory channel-transporter complexes that modulate Na(+)-coupled myo-inositol influx through the transporter. In terms of processing, phosphorylation at Ser-27 by PKA; increases delayed rectifier potassium channel activity of the KCNQ1-KCNE1 complex through a macromolecular complex that includes PKA, PP1, and the targeting protein AKAP9. Ubiquitinated by NEDD4L; promotes internalization. The ubiquitinylated form is internalized through a clathrin-mediated endocytosis by interacting with AP2M1 and is recycled back to the cell membrane via RAB4A and RAB11A. Post-translationally, deubiquitinated by USP2; counteracts the NEDD4L-specific down-regulation of I(Ks) and restores the membrane localization.

Its subcellular location is the cell membrane. It is found in the cytoplasmic vesicle membrane. The protein localises to the early endosome. It localises to the membrane raft. The protein resides in the endoplasmic reticulum. Its subcellular location is the basolateral cell membrane. It is found in the apical cell membrane. The enzyme catalyses K(+)(in) = K(+)(out). With respect to regulation, PIP2 molecule is essential to activate KCNQ channels by inducing the coupling of the voltage-sensing domain (VSD) and the pore-forming domain (PD). Upon channel activation, PIP2 disrupts the VSD-calmodulin/CALM interactions, causing the release of CALM from the VSD which triggers the opening of the gate. Calcium potentiates KCNQ1 channel current through calcium-bound CALM. Calcium-bound CALM competes with PIP2 to stabilize the channel open state. Pore-forming subunit of the voltage-gated potassium (Kv) channel involved in the regulation of cardiomyocyte excitability and important in normal development and functions of myocardium, inner ear, stomach and colon. Associates with KCNE beta subunits that modulates current kinetics. Induces a voltage-dependent by rapidly activating and slowly deactivating potassium-selective outward current. Also promotes a delayed voltage activated potassium current showing outward rectification characteristic. During beta-adrenergic receptor stimulation participates in cardiac repolarization by associating with KCNE1 to form the I(Ks) cardiac potassium current that increases the amplitude and slows down the activation kinetics of outward potassium current I(Ks). Muscarinic agonist oxotremorine-M strongly suppresses KCNQ1/KCNE1 current. When associated with KCNE3, forms the potassium channel that is important for cyclic AMP-stimulated intestinal secretion of chloride ions. This interaction with KCNE3 is reduced by 17beta-estradiol, resulting in the reduction of currents. During conditions of increased substrate load, maintains the driving force for proximal tubular and intestinal sodium ions absorption, gastric acid secretion, and cAMP-induced jejunal chloride ions secretion. Allows the provision of potassium ions to the luminal membrane of the secretory canaliculus in the resting state as well as during stimulated acid secretion. When associated with KCNE2, forms a heterooligomer complex leading to currents with an apparently instantaneous activation, a rapid deactivation process and a linear current-voltage relationship and decreases the amplitude of the outward current. When associated with KCNE4, inhibits voltage-gated potassium channel activity. When associated with KCNE5, this complex only conducts current upon strong and continued depolarization. Also forms a heterotetramer with KCNQ5 that has a voltage-gated potassium channel activity. Binds with phosphatidylinositol 4,5-bisphosphate. KCNQ1-KCNE2 channel associates with Na(+)-coupled myo-inositol symporter in the apical membrane of choroid plexus epithelium and regulates the myo-inositol gradient between blood and cerebrospinal fluid with an impact on neuron excitability. In Rattus norvegicus (Rat), this protein is Potassium voltage-gated channel subfamily KQT member 1.